A 61-amino-acid polypeptide reads, in one-letter code: QHWSYGLRPGGKRNAKNVIDSFQEIAKEVDQPVEPKCCGCIVHQSHSPLRDLKAALESLIE.

The residue at position 1 (Gln1) is a Pyrrolidone carboxylic acid. Gly10 carries the post-translational modification Glycine amide.

This sequence belongs to the GnRH family.

Its subcellular location is the secreted. Stimulates the secretion of gonadotropins; it stimulates the secretion of both luteinizing and follicle-stimulating hormones. This is Progonadoliberin-1 (GNRH1) from Ovis aries (Sheep).